We begin with the raw amino-acid sequence, 807 residues long: Nucleolar complex protein 3 homolog (807 aa).

Disordered stretches follow at residues 27 to 93 (KLKN…DMMD) and 167 to 191 (EKPV…EVIE). The span at 40–51 (KKYRKEQRKLRQ) shows a compositional bias: basic residues. Residues 52–78 (AVKDAVSKKPIPLEDPKSKRPVKRMER) show a composition bias toward basic and acidic residues. Acidic residues-rich tracts occupy residues 79 to 93 (EEDE…DMMD) and 174 to 190 (QQEE…EEVI). A Glycyl lysine isopeptide (Lys-Gly) (interchain with G-Cter in SUMO2) cross-link involves residue Lys332. Positions 449 to 489 (FKEKRKTLSRMQRKWKKAEEKLERELREAEASESTEKKLKL) form a coiled coil.

The protein belongs to the CBF/MAK21 family.

It localises to the nucleus. Its subcellular location is the nucleolus. The protein localises to the nucleus speckle. In terms of biological role, may be required for adipogenesis. The chain is Nucleolar complex protein 3 homolog (Noc3l) from Mus musculus (Mouse).